Reading from the N-terminus, the 84-residue chain is Mu-Sparatoxin-Hp1 (84 aa).

The N-terminal stretch at 1–20 (MKIAIVMTLLLVAFSTASFA) is a signal peptide. Positions 21 to 35 (IEPIERAALDLVMAR) are excised as a propeptide. Disulfide bonds link Cys54–Cys68, Cys61–Cys73, and Cys67–Cys78. Leu82 is modified (leucine amide).

Expressed by the venom gland.

It localises to the secreted. Weakly nhibits voltage-gated sodium channels Nav1.7/SCN9A. High concentration of the toxin (3 uM) inhibits Nav1.7/SCN9A currents by 79%. The sequence is that of Mu-Sparatoxin-Hp1 from Heteropoda pingtungensis (Pingtung huntsman spider).